Reading from the N-terminus, the 134-residue chain is Spermadhesin-1 (134 aa).

Positions 1–20 (MKLSSVIPWALLLSTATVDS) are cleaved as a signal peptide. Cystine bridges form between Cys-30–Cys-51 and Cys-74–Cys-95. Residues 30 to 131 (CGGILKEESG…SFYEVLYFQD (102 aa)) enclose the CUB domain.

The protein belongs to the spermadhesin family. As to expression, seminal vesicle tissue, ampulla and weakly in tissue of epididymis.

The protein localises to the secreted. Stimulates cell division and progesterone secretion of bovine granulosa cells in vitro in a potent and dose dependent manner. This protein appears to be a potent growth factor with effects on ovarian granulosa cells. This Bos taurus (Bovine) protein is Spermadhesin-1 (SPADH1).